We begin with the raw amino-acid sequence, 242 residues long: Transcription factor Spi-C (242 aa).

The segment at residues 112–195 (LRLFEYLFES…IRRKLTYQFS (84 aa)) is a DNA-binding region (ETS).

This sequence belongs to the ETS family. As to quaternary structure, binds DNA as a monomer. Expressed in lymphoid tissues, including spleen, bone marrow and thymus. According to PubMed:19037245, highly expressed in red pulp macrophages and, at lower, levels in B-cells, but not in other cells, including, monocytes, dendritic cells and other tissue macrophages. According to PubMed:10464163 expressed in pre- and mature B-cells but not in immature B-cells; according to PubMed:10187812 not expressed in pre- but predominantly in mature B-cells and at lower levels in macrophages.

The protein resides in the nucleus. Its function is as follows. Controls the development of red pulp macrophages required for red blood cells recycling and iron homeostasis. Transcription factor that binds to the PU-box, a purine-rich DNA sequence (5'-GAGGA[AT]-3') that can act as a lymphoid-specific enhancer. Regulates VCAM1 gene expression. The polypeptide is Transcription factor Spi-C (Spic) (Mus musculus (Mouse)).